We begin with the raw amino-acid sequence, 1315 residues long: MEKYHVLEMIGEGSFGRVYKGRRKYSAQVVALKFIPKLGRSEKELRNLQREIEIMRGLRHPNIVHMLDSFETDKEVVVVTDYAEGELLQILEDDGKLPEDQVQAIAAQLVSALYYLHSHRILHRDMKPQNILLAKGGGIKLCDFGFARAMSTNTMVLTSIKGTPLYMSPELVEERPYDHTADLWSVGCILYELAVGTPPFYATSIFQLVSLILKDPVRWPSTISPCFKNFLQGLLTKDPRQRLSWPDLLYHPFIAGHVTIITETAGPDLGTPFTSRLPPELQVLKDKQAHRLSPKGNQSRILTQAYERMAEEAMQKKHQNTGPALEQEDKTSKVAPGTAPLPRLGATPQESSLLAGILASELKSSWAESGTGEAPSAPRENRTTPDCERAFPEERPEVLGQRSTDAVDLEDEEPDSDNEWQHLLETTEPVPIQLKAPLTLLCNPDFCQRIQSQLHEAGGQILKGILEGASHILPAFRVLSSLLSSCSDSVALYSFCREAGLPGLLLSLLRHSQESNSLQQQSWYGTFLQDLMAVIQAYFACTFNLERSQTSDSLQVFQEAANLFLDLLGKLLAQPDDSERTLRRDNLMCFTVLCEAMDGNSRAISKAFYSSLLTTKQVVLDGLLRGLTVPQLPVHTPPGAPQVSQPLREQSEDIPGAISSALAAICTAPVGLPDCWDGKEQVCWHLANQLTEDSSQLRPSLVSGLQHPILCLHLLKVLYSCCLVSERLCRLLGQEPLALESLFMLVQGKVKVVDWEESTEVTLYFLSLLVFRLQNLPCGMEKLGSDVATLFTHSHVASLVSAAACLLGQLGQQGVTFDLQPMEWMAAATHALSAPAEVRLTPPGSCGFYDGLLILLLQLLTEQGKASLIRDMSSSEMWTVLRHRFSMVLRLPKEASAQEGELSLSNPPSPEPDWTLISPQGMAALLSLAMATFAQEPQLCLSCLSQHGSILMSILKHLLCPSFLNQLRQAPHGSEFLPVVVLSVCQLLCFPFALDMDADLLIGVLADLRDSEVAAHLLQVCCYHLPLTQVELPISLLTRLALTDPTSLNQFVNTVAASPRTIISFLSVALLSDQPLLTSDLLSLLAHTARVLSPSHLSFIQELLAGSDESYQSLRSLLGHPENSVRAHTYRLLGHLLQHSMALRGALQSQSGLLSLLLLGLGDKDPVVRCSASFAVGNAAYQAGPLGPALAAAVPSMTQLLGDPQAGIRRNVASALGNLGLEGLGEELLQCQVPQRLLEMACGDPQPNVKEAALIALRSLQQEPGIRQVLVSLGASEKLALLSLGNQLLPHSSPRPASAKHCRKLIHLLRPAHSM.

The Protein kinase domain occupies 4–254 (YHVLEMIGEG…WPDLLYHPFI (251 aa)). Residues 10–18 (IGEGSFGRV) and K33 each bind ATP. D125 acts as the Proton acceptor in catalysis. Disordered stretches follow at residues 312 to 345 (EAMQ…PRLG) and 365 to 405 (SWAE…RSTD). A compositionally biased stretch (basic and acidic residues) spans 379 to 397 (RENRTTPDCERAFPEERPE).

This sequence belongs to the protein kinase superfamily. Ser/Thr protein kinase family. In terms of assembly, interacts with SPAG16 and KIF27. Mg(2+) serves as cofactor.

Its subcellular location is the cytoplasm. The protein resides in the nucleus. It is found in the cytoskeleton. The protein localises to the cilium axoneme. The catalysed reaction is L-seryl-[protein] + ATP = O-phospho-L-seryl-[protein] + ADP + H(+). It catalyses the reaction L-threonyl-[protein] + ATP = O-phospho-L-threonyl-[protein] + ADP + H(+). Its function is as follows. Serine/threonine protein kinase which plays an important role in the sonic hedgehog (Shh) pathway by regulating the activity of GLI transcription factors. Controls the activity of the transcriptional regulators GLI1, GLI2 and GLI3 by opposing the effect of SUFU and promoting their nuclear localization. GLI2 requires an additional function of STK36 to become transcriptionally active, but the enzyme does not need to possess an active kinase catalytic site for this to occur. Required for postnatal development, possibly by regulating the homeostasis of cerebral spinal fluid or ciliary function. Essential for construction of the central pair apparatus of motile cilia. This chain is Serine/threonine-protein kinase 36, found in Pongo abelii (Sumatran orangutan).